A 559-amino-acid polypeptide reads, in one-letter code: MNEHSLIEIEGLNKTFDDGYVSIRDISLNIKKGEFITILGPSGCGKTTLLRLLAGFEDPTYGKIKVNGIDIKDMAIHKRPFATVFQDYALFSHLTVYKNIAYGLKVMWTKLDEIPKLVSDYQKQLALKHLKLERKIEQLQKNNSNAQRIKKLKEKLQKLLEINKQKVIEFENKEKLRREDIYKNLEQLTKEWDLLSQKKLKEVEQQKQAIDKSFEKVENKYKKDPWFFQHSEIRLKQYQKKKTELKADIKATKNKEQIQKLTKELQTLKQKYANKKAIDKEYDKLVVAYNKKDYWTSYWETYTLQQKEAFEKRYLSRKLTKAEQNKKVSDVIEMVGLKGKEDRLPDELSGGMKQRVALARSLVVEPEILLLDEPLSALDAKVRKNLQKELQQIHKKSGLTFILVTHDQEEALVLSDRIVVMNEGNILQVGNPVDIYDSPKTEWIANFIGQANIFKGTYLGEKKIQLQSGEIIQTDVDNNYVVGKQYKILIRPEDFDLVPENKGFFNVRVIDKNYKGLLWKITTQLKDNTIVDLESVNEVDVNKTFGVLFDPIDVHLMEV.

In terms of domain architecture, ABC transporter spans 7 to 448; sequence IEIEGLNKTF…PKTEWIANFI (442 aa). Position 40 to 47 (40 to 47) interacts with ATP; sequence GPSGCGKT. The insert stretch occupies residues 108-317; that stretch reads WTKLDEIPKL…EAFEKRYLSR (210 aa).

It belongs to the ABC transporter superfamily. Spermidine/putrescine importer (TC 3.A.1.11.1) family. As to quaternary structure, the complex is composed of two ATP-binding proteins (PotA), two transmembrane proteins (PotB and PotC) and a solute-binding protein (PotD).

The protein localises to the cell membrane. It catalyses the reaction ATP + H2O + polyamine-[polyamine-binding protein]Side 1 = ADP + phosphate + polyamineSide 2 + [polyamine-binding protein]Side 1.. Functionally, part of the ABC transporter complex PotABCD involved in spermidine/putrescine import. Responsible for energy coupling to the transport system. The sequence is that of Spermidine/putrescine import ATP-binding protein PotA from Mycoplasma genitalium (strain ATCC 33530 / DSM 19775 / NCTC 10195 / G37) (Mycoplasmoides genitalium).